Here is a 176-residue protein sequence, read N- to C-terminus: I-Kappa-B like protein G1 (176 aa).

ANK repeat units follow at residues 56-88 (EGRQ…DINS), 93-123 (FGNT…ELGA), and 127-156 (LYKT…VCDD).

The protein belongs to the polydnaviridae I-Kappa-B-like protein family.

Functionally, suppresses the host immune response through NF-kappa-B inactivation. Possesses ankyrin repeat domains required for NF-kappa-B binding but lacks the regulatory regions required for dissociation from NF-kappa-B and degradation. Therefore, prevents host NF-kappa-B release and subsequent activation. In Microplitis demolitor (Parasitoid wasp), this protein is I-Kappa-B like protein G1 (G3).